The sequence spans 311 residues: Progestin and adipoQ receptor family member 3 (311 aa).

The segment at 1–20 is required for interaction with SREBF2; that stretch reads MHQKLLKSAHYIELGSYQYW. Over 1 to 70 the chain is Cytoplasmic; it reads MHQKLLKSAH…KSLFILSNET (70 aa). Residues 41–60 form a required for interaction with SCAP region; it reads KDNPYITDGYRAYLPSRLCI. Residues 61–71 are golgi targeting; that stretch reads KSLFILSNETV. A helical membrane pass occupies residues 71–91; the sequence is VNIWSHLLGFFLFFTLGIYDM. Over 92-104 the chain is Lumenal; sequence TSVLPSASASRED. Residues 105 to 125 form a helical membrane-spanning segment; sequence FVICSICLFCFQVCMLCSVGY. At 126-145 the chain is on the cytoplasmic side; sequence HLFSCHRSEKTCRRWMALDY. Residues 146 to 166 form a helical membrane-spanning segment; it reads AGISIGILGCYVSGVFYAFYC. The Lumenal segment spans residues 167 to 172; sequence NNYWRQ. A helical membrane pass occupies residues 173-193; that stretch reads VYLITVLAMILAVFFAQIHPS. Residues 194–203 lie on the Cytoplasmic side of the membrane; that stretch reads YLTQQWQRLR. A helical transmembrane segment spans residues 204–224; it reads PIIFCSVSGYGVIPTLHWVWL. The Lumenal portion of the chain corresponds to 225 to 235; sequence NGGVSAPIVQD. Residues 236–256 traverse the membrane as a helical segment; sequence FAPRVIVMYVIALLAFLFYIS. Residues 257-275 are Cytoplasmic-facing; sequence KVPERYFPGQLNYLGSSHQ. Residues 276–296 form a helical membrane-spanning segment; that stretch reads IWHVLAVVMLYWWHQSTVYVM. Over 297–311 the chain is Lumenal; that stretch reads QYRHSKPCPDYVSHL. The golgi targeting stretch occupies residues 299 to 303; it reads RHSKP.

It belongs to the ADIPOR family. Interacts with SCAP and SREBF2; the interactions are direct, increase in low cholesterol conditions and tether SCAP:SREBP complex to the Golgi apparatus. Interaction with SCAP is mutually exclusive with INSIG1. In hepatocytes, interacts with PPARA and HUWE1; the interactions promote PPARA poylubiquitination and HUWE1-mediated degradation. In macrophages, interacts with PPARG and STUB1; the interactions promote PPARG poylubiquitination and STUB1-mediated degradation.

Its subcellular location is the golgi apparatus membrane. Its function is as follows. Golgi-anchored protein which modulates its interactors acitivies by tethering them to the Golgi apparatus. Functions as a spatial regulator of RAF1 kinase by sequestrating it to the Golgi apparatus. Acts as a positive regulator of cholesterol biosynthesis by mediating the anchoring of the SCAP:SREBP complex in the Golgi apparatus, thereby promoting SCAP:SREBF2 complex formation, potentiating SREBF2 and SREBF1 processing and enhancing lipid synthesis. Also regulates PPARA and PPARG functions by mediating their interaction with E3 ubiquitin ligases, such as STUB1 or HUWE1, leading to their polyubiquitination and proteasome-mediated degradation. This chain is Progestin and adipoQ receptor family member 3, found in Mus musculus (Mouse).